The sequence spans 58 residues: Small ribosomal subunit protein bS21 (58 aa).

The interval 36-58 (EHYEKPSVKRKKKSEAARRRKYR) is disordered. Positions 43–58 (VKRKKKSEAARRRKYR) are enriched in basic residues.

It belongs to the bacterial ribosomal protein bS21 family.

The sequence is that of Small ribosomal subunit protein bS21 from Symbiobacterium thermophilum (strain DSM 24528 / JCM 14929 / IAM 14863 / T).